The chain runs to 451 residues: MQSIEDIWQETLQIVKKNMSKPSYDTWMKSTTAHSLEGNTFIISAPNNFVRDWLEKSYTQFIANILQEITGRLFDVRFIDGEQEENFEYTVIKPNPALDEDGIEIGKHMLNPRYVFDTFVIGSGNRFAHAASLAVAEAPAKAYNPLFIYGGVGLGKTHLMHAVGHYVQQHKDNAKVMYLSSEKFTNEFISSIRDNKTEEFRTKYRNVDVLLIDDIQFLAGKEGTQEEFFHTFNTLYDEQKQIIISSDRPPKEIPTLEDRLRSRFEWGLITDITPPDLETRIAILRKKAKADGLDIPNEVMLYIANQIDSNIRELEGALIRVVAYSSLVNKDITAGLAAEALKDIIPSSKSQVITISGIQETVGEYFHVRLEDFKAKKRTKSIAFPRQIAMYLSRELTDASLPKIGDEFGGRDHTTVIHAHEKISQLLKTDQVLKNDLAEIEKNLRKSQNMF.

Residues 1 to 72 (MQSIEDIWQE…ANILQEITGR (72 aa)) are domain I, interacts with DnaA modulators. A domain II region spans residues 72 to 108 (RLFDVRFIDGEQEENFEYTVIKPNPALDEDGIEIGKH). The segment at 109 to 325 (MLNPRYVFDT…GALIRVVAYS (217 aa)) is domain III, AAA+ region. ATP-binding residues include Gly-153, Gly-155, Lys-156, and Thr-157. The tract at residues 326–451 (SLVNKDITAG…KNLRKSQNMF (126 aa)) is domain IV, binds dsDNA.

The protein belongs to the DnaA family. As to quaternary structure, oligomerizes as a right-handed, spiral filament on DNA at oriC.

The protein resides in the cytoplasm. Its function is as follows. Plays an essential role in the initiation and regulation of chromosomal replication. ATP-DnaA binds to the origin of replication (oriC) to initiate formation of the DNA replication initiation complex once per cell cycle. Binds the DnaA box (a 9 base pair repeat at the origin) and separates the double-stranded (ds)DNA. Forms a right-handed helical filament on oriC DNA; dsDNA binds to the exterior of the filament while single-stranded (ss)DNA is stabiized in the filament's interior. The ATP-DnaA-oriC complex binds and stabilizes one strand of the AT-rich DNA unwinding element (DUE), permitting loading of DNA polymerase. After initiation quickly degrades to an ADP-DnaA complex that is not apt for DNA replication. Binds acidic phospholipids. This chain is Chromosomal replication initiator protein DnaA, found in Listeria welshimeri serovar 6b (strain ATCC 35897 / DSM 20650 / CCUG 15529 / CIP 8149 / NCTC 11857 / SLCC 5334 / V8).